Reading from the N-terminus, the 480-residue chain is Glutamate--tRNA ligase (480 aa).

The 'HIGH' region motif lies at 9–19; sequence PSPTGNLHIGT. The 'KMSKS' region motif lies at 250–254; sequence KLSKR. Lys-253 contributes to the ATP binding site.

It belongs to the class-I aminoacyl-tRNA synthetase family. Glutamate--tRNA ligase type 1 subfamily. As to quaternary structure, monomer.

The protein localises to the cytoplasm. The enzyme catalyses tRNA(Glu) + L-glutamate + ATP = L-glutamyl-tRNA(Glu) + AMP + diphosphate. Functionally, catalyzes the attachment of glutamate to tRNA(Glu) in a two-step reaction: glutamate is first activated by ATP to form Glu-AMP and then transferred to the acceptor end of tRNA(Glu). The chain is Glutamate--tRNA ligase from Microcystis aeruginosa (strain NIES-843 / IAM M-2473).